We begin with the raw amino-acid sequence, 92 residues long: uncharacterized protein (92 aa).

This is an uncharacterized protein from Pseudoalteromonas phage PM2 (Bacteriophage PM2).